The sequence spans 641 residues: MGPPLKLFKNQKYQELKQECIKDSRLFCDPTFLPENDSLFYNRLLPGKVVWKRPQDICDDPHLIVGNISNHQLTQGRLGHKPMVSAFSCLAVQESHWTKTIPNHKEQEWDPQKTEKYAGIFHFRFWHFGEWTEVVIDDLLPTINGDLVFSFSTSMNEFWNALLEKAYAKLLGCYEALDGLTITDIIVDFTGTLAETVDMQKGRYTELVEEKYKLFGELYKTFTKGGLICCSIESPNQEEQEVETDWGLLKGHTYTMTDIRKIRLGERLVEVFSAEKVYMVRLRNPLGRQEWSGPWSEISEEWQQLTASDRKNLGLVMSDDGEFWMSLEDFCRNFHKLNVCRNVNNPIFGRKELESVLGCWTVDDDPLMNRSGGCYNNRDTFLQNPQYIFTVPEDGHKVIMSLQQKDLRTYRRMGRPDNYIIGFELFKVEMNRKFRLHHLYIQERAGTSTYIDTRTVFLSKYLKKGNYVLVPTMFQHGRTSEFLLRIFSEVPVQLRELTLDMPKMSCWNLARGYPKVVTQITVHSAEDLEKKYANETVNPYLVIKCGKEEVRSPVQKNTVHAIFDTQAIFYRRTTDIPIIVQVWNSRKFCDQFLGQVTLDADPSDCRDLKSLYLRKKGGPTAKVKQGHISFKVISSDDLTEL.

Residues Leu26–Val343 form the Calpain catalytic domain. The segment at Asn344–Arg495 is domain III. Positions Thr498 to Ala621 constitute a C2 domain.

This sequence belongs to the peptidase C2 family. Interacts (via domain III) with microtubules. Interacts (via domain II) with ARHGEF2 (via the N-terminal zinc finger). As to expression, expressed only in placenta.

It localises to the cytoplasm. The protein resides in the perinuclear region. It is found in the cytoskeleton. Its subcellular location is the spindle. Its function is as follows. Microtubule-stabilizing protein that may be involved in the regulation of microtubule dynamics and cytoskeletal organization. May act as a regulator of RAC1 activity through interaction with ARHGEF2 to control lamellipodial formation and cell mobility. Does not seem to have protease activity as it has lost the active site residues. The sequence is that of Calpain-6 (CAPN6) from Homo sapiens (Human).